The primary structure comprises 396 residues: Mevalonate kinase (396 aa).

ATP is bound by residues Lys13, Asn55, Ser135, and 140–146; that span reads GAGLGSS. Ser146 serves as the catalytic Proton donor. Residues Ser146 and Glu193 each coordinate Mg(2+). The active-site Proton acceptor is Asp204.

This sequence belongs to the GHMP kinase family. Mevalonate kinase subfamily. Homodimer. The cofactor is Mg(2+).

Its subcellular location is the cytoplasm. It localises to the peroxisome. The catalysed reaction is (R)-mevalonate + ATP = (R)-5-phosphomevalonate + ADP + H(+). It functions in the pathway isoprenoid biosynthesis; isopentenyl diphosphate biosynthesis via mevalonate pathway; isopentenyl diphosphate from (R)-mevalonate: step 1/3. Farnesyl pyrophosphate and geranyl pyrophosphate inhibit mevalonate kinase activity by binding competitively at the ATP-binding sites. Functionally, catalyzes the phosphorylation of mevalonate to mevalonate 5-phosphate, a key step in isoprenoid and cholesterol biosynthesis. This chain is Mevalonate kinase, found in Bos taurus (Bovine).